We begin with the raw amino-acid sequence, 829 residues long: Protein roadkill (829 aa).

Composition is skewed to low complexity over residues 24–36 (EQQQHHLQQQQQQ), 122–140 (TPAATATPPQQQQQQQAAP), and 266–288 (SSSSSSSASASSSSVAASSSSSS). Disordered regions lie at residues 24–47 (EQQQHHLQQQQQQPATSDNCCCEN), 106–142 (SSLQQQQHQQQQHHPHTPAATATPPQQQQQQQAAPSV), 266–296 (SSSSSSSASASSSSVAASSSSSSHHLHSHHS), and 313–400 (HLNQ…NQQQ). Positions 313-322 (HLNQQQHHHP) are enriched in basic residues. Low complexity-rich tracts occupy residues 323-353 (LSASSSSASASPSASTSSSSSYQQSSVQQQH), 372-382 (SSSSSSSSSSS), and 389-400 (SSSSSNSNNQQQ). The 131-residue stretch at 486–616 (KFSYMWTINN…EDKLTIFCEV (131 aa)) folds into the MATH domain. Positions 655-722 (SDVTLSVGGR…IYTGKAPNLE (68 aa)) constitute a BTB domain.

It belongs to the Tdpoz family. As to quaternary structure, interacts with ci and gft/CUL3. Expressed near the anterio-posterior compartment boundary of antenna, leg and wing disks.

The protein resides in the nucleus. It participates in protein modification; protein ubiquitination. Involved in segment polarity. In complex with gft/CUL3, promotes ubiquitination of ci and its subsequent degradation by the proteasome, which results in hh signaling attenuation. This regulation may be important during eye formation for proper packing of ommatidia into a hexagonal array. The sequence is that of Protein roadkill (rdx) from Drosophila melanogaster (Fruit fly).